Reading from the N-terminus, the 103-residue chain is UPF0145 protein NT01CX_0170 (103 aa).

The protein belongs to the UPF0145 family.

This chain is UPF0145 protein NT01CX_0170, found in Clostridium novyi (strain NT).